The chain runs to 187 residues: UPF0215 protein PAE0952 (187 aa).

Belongs to the UPF0215 family.

This chain is UPF0215 protein PAE0952, found in Pyrobaculum aerophilum (strain ATCC 51768 / DSM 7523 / JCM 9630 / CIP 104966 / NBRC 100827 / IM2).